An 84-amino-acid polypeptide reads, in one-letter code: Beta-defensin 119 (84 aa).

The N-terminal stretch at 1-21 is a signal peptide; that stretch reads MKFLFLFLAILLATKIPVISG. 3 disulfide bridges follow: cysteine 28–cysteine 55, cysteine 35–cysteine 49, and cysteine 39–cysteine 56.

This sequence belongs to the beta-defensin family.

It localises to the secreted. Functionally, has antibacterial activity. The protein is Beta-defensin 119 (DEFB119) of Macaca fascicularis (Crab-eating macaque).